The sequence spans 156 residues: Small ribosomal subunit protein uS7 (156 aa).

It belongs to the universal ribosomal protein uS7 family. Part of the 30S ribosomal subunit. Contacts proteins S9 and S11.

Functionally, one of the primary rRNA binding proteins, it binds directly to 16S rRNA where it nucleates assembly of the head domain of the 30S subunit. Is located at the subunit interface close to the decoding center, probably blocks exit of the E-site tRNA. This is Small ribosomal subunit protein uS7 from Dictyoglomus turgidum (strain DSM 6724 / Z-1310).